Reading from the N-terminus, the 688-residue chain is MTARKIFVTTALPYANGNFHIGHIMEYIQADTWVRAQRMQGNAVNFVGADDAHGAPIMIAAEKAGKTPQQFVADIAAGRKQYLDGFHIAFDNWSNTDSPENHELSQQIYLDLKAAGFIETRTIEQFFDPEKNMFLPDRFIKGECPRCHAKDQYGDNCEVCSSVYAPTDLINPYSALSGAKPVLKTSEHFFFKLSDPRAVEFLTEWTQNGQHVQPEVAAKIKEWFGTRTNPDGTTSEGLDDWDISRDAPYFGIEIPDAPGKYFYVWLDAPVGYLASLKNLLNKRGEDYDAYMADPQLEQYHFIGKDIITFHTLFWPAMLKFSGRKTPTKICVHGFMTVNNGEKMSKSRGTGLDPLKYLALGMNPEWLRYYLGAKLNGKNEDIDFNPEDFMARVNSDLIGKYVNIASRAAGFIFKRFGGKLGEVSADGQALLAQLREQAGPIVAAYEARDTARAVRETMLLCDRVNSYVDANKPWELAKQEGMEARLQDVCTTCIEAFRILTIYLKPILPQVAAEVARFLIVPPEQFAEVAQPLGAGHQIGQYQHLMQRVTQEQLDALFEPPAPAVEKVIPGGEEIAPTITIDDFAKVDLRIAKIVKCEAVEGSTKLLRLTLDAGEGQTRNVFSGIASMYKPEDLQGKLTVMVANLAPRKMKFGLSEGMVLAASHADEKAHPGIFVLEPFPGAQPGMRIH.

The short motif at 13 to 23 (PYANGNFHIGH) is the 'HIGH' region element. Zn(2+) is bound by residues Cys-144, Cys-147, Cys-157, and Cys-160. The 'KMSKS' region signature appears at 342 to 346 (KMSKS). An ATP-binding site is contributed by Lys-345. Residues 582-688 (DFAKVDLRIA…PGAQPGMRIH (107 aa)) enclose the tRNA-binding domain.

This sequence belongs to the class-I aminoacyl-tRNA synthetase family. MetG type 1 subfamily. As to quaternary structure, homodimer. Zn(2+) is required as a cofactor.

The protein localises to the cytoplasm. The enzyme catalyses tRNA(Met) + L-methionine + ATP = L-methionyl-tRNA(Met) + AMP + diphosphate. Its function is as follows. Is required not only for elongation of protein synthesis but also for the initiation of all mRNA translation through initiator tRNA(fMet) aminoacylation. This chain is Methionine--tRNA ligase, found in Acidovorax ebreus (strain TPSY) (Diaphorobacter sp. (strain TPSY)).